We begin with the raw amino-acid sequence, 143 residues long: Large ribosomal subunit protein uL11 (143 aa).

This sequence belongs to the universal ribosomal protein uL11 family. In terms of assembly, part of the ribosomal stalk of the 50S ribosomal subunit. Interacts with L10 and the large rRNA to form the base of the stalk. L10 forms an elongated spine to which L12 dimers bind in a sequential fashion forming a multimeric L10(L12)X complex. One or more lysine residues are methylated.

In terms of biological role, forms part of the ribosomal stalk which helps the ribosome interact with GTP-bound translation factors. This chain is Large ribosomal subunit protein uL11, found in Rhizobium etli (strain ATCC 51251 / DSM 11541 / JCM 21823 / NBRC 15573 / CFN 42).